A 361-amino-acid chain; its full sequence is Putative F-box protein At3g18340 (361 aa).

Residues 1 to 46 enclose the F-box domain; that stretch reads MASGKLPWELEEEILCRLPPGSLVRLRSVCKHWNDLYNDKWFIKKS.

The polypeptide is Putative F-box protein At3g18340 (Arabidopsis thaliana (Mouse-ear cress)).